The primary structure comprises 373 residues: Leucoanthocyanidin dioxygenase 2 (373 aa).

In terms of domain architecture, Fe2OG dioxygenase spans 216–315 (LLLQLKINYY…RVSWVVFCEP (100 aa)). Fe cation contacts are provided by H240, D242, and H296. R306 lines the 2-oxoglutarate pocket.

The protein belongs to the iron/ascorbate-dependent oxidoreductase family. L-ascorbate is required as a cofactor. The cofactor is Fe(2+).

It catalyses the reaction a (2R,3S,4S)-leucoanthocyanidin + 2-oxoglutarate + O2 = a 4-H-anthocyanidin with a 3-hydroxy group + succinate + CO2 + 2 H2O. Its pathway is pigment biosynthesis; anthocyanin biosynthesis. Functionally, involved in anthocyanin and protoanthocyanidin biosynthesis by catalyzing the oxidation of leucoanthocyanidins into anthocyanidins. In Oryza sativa subsp. japonica (Rice), this protein is Leucoanthocyanidin dioxygenase 2.